An 81-amino-acid polypeptide reads, in one-letter code: Photosystem I iron-sulfur center (81 aa).

4Fe-4S ferredoxin-type domains follow at residues 2-31 (SHSVKIYDTCIGCTQCVRACPTDVLEMIPW) and 39-68 (IASAPRTEDCVGCKRCESACPTDFLSVRVS). The [4Fe-4S] cluster site is built by cysteine 11, cysteine 14, cysteine 17, cysteine 21, cysteine 48, cysteine 51, cysteine 54, and cysteine 58.

In terms of assembly, the eukaryotic PSI reaction center is composed of at least 11 subunits. Requires [4Fe-4S] cluster as cofactor.

It is found in the plastid. The protein localises to the chloroplast thylakoid membrane. The enzyme catalyses reduced [plastocyanin] + hnu + oxidized [2Fe-2S]-[ferredoxin] = oxidized [plastocyanin] + reduced [2Fe-2S]-[ferredoxin]. Apoprotein for the two 4Fe-4S centers FA and FB of photosystem I (PSI); essential for photochemical activity. FB is the terminal electron acceptor of PSI, donating electrons to ferredoxin. The C-terminus interacts with PsaA/B/D and helps assemble the protein into the PSI complex. Required for binding of PsaD and PsaE to PSI. PSI is a plastocyanin-ferredoxin oxidoreductase, converting photonic excitation into a charge separation, which transfers an electron from the donor P700 chlorophyll pair to the spectroscopically characterized acceptors A0, A1, FX, FA and FB in turn. This is Photosystem I iron-sulfur center from Daucus carota (Wild carrot).